The chain runs to 156 residues: MNKYFLAGIISVVTLVLDQVTKIAVREKMVLWTSETVIPGFFNLVHVVNKGAAFGFLNRADITWQRNFFVVVTIIALGAIGMLLKSAEEKDKFQILGLGFVLGGAIGNLIDRILYHQVTDFLDFYYGSHHYPAFNVADIAICLGAFAMIVSFYKNK.

3 helical membrane-spanning segments follow: residues 37–57, 68–88, and 95–115; these read VIPGFFNLVHVVNKGAAFGFL, FFVVVTIIALGAIGMLLKSAE, and ILGLGFVLGGAIGNLIDRILY. Catalysis depends on residues aspartate 120 and aspartate 138. Residues 133 to 153 form a helical membrane-spanning segment; that stretch reads AFNVADIAICLGAFAMIVSFY.

The protein belongs to the peptidase A8 family.

It is found in the cell inner membrane. The enzyme catalyses Release of signal peptides from bacterial membrane prolipoproteins. Hydrolyzes -Xaa-Yaa-Zaa-|-(S,diacylglyceryl)Cys-, in which Xaa is hydrophobic (preferably Leu), and Yaa (Ala or Ser) and Zaa (Gly or Ala) have small, neutral side chains.. The protein operates within protein modification; lipoprotein biosynthesis (signal peptide cleavage). In terms of biological role, this protein specifically catalyzes the removal of signal peptides from prolipoproteins. This is Lipoprotein signal peptidase from Maridesulfovibrio salexigens (strain ATCC 14822 / DSM 2638 / NCIMB 8403 / VKM B-1763) (Desulfovibrio salexigens).